A 91-amino-acid chain; its full sequence is MKLDENEIKRRLGEIEGWSYENNKLKKTFKFKNFYESVEFVRKIQPIADEMDHHPDLCVYYNRVVLELSTHSEGGVTEKDFELAKKINKIQ.

It belongs to the pterin-4-alpha-carbinolamine dehydratase family.

The enzyme catalyses (4aS,6R)-4a-hydroxy-L-erythro-5,6,7,8-tetrahydrobiopterin = (6R)-L-erythro-6,7-dihydrobiopterin + H2O. The chain is Putative pterin-4-alpha-carbinolamine dehydratase from Sulfolobus acidocaldarius (strain ATCC 33909 / DSM 639 / JCM 8929 / NBRC 15157 / NCIMB 11770).